Here is a 344-residue protein sequence, read N- to C-terminus: tRNA N6-adenosine threonylcarbamoyltransferase (344 aa).

Fe cation is bound by residues H114 and H118. Residues 136 to 140 (LVSGG), D170, G183, D187, and N278 each bind substrate. D306 contacts Fe cation. Positions 325–344 (PSPLDVPSDPGLPVMQGQVR) are disordered.

Belongs to the KAE1 / TsaD family. The cofactor is Fe(2+).

The protein localises to the cytoplasm. It catalyses the reaction L-threonylcarbamoyladenylate + adenosine(37) in tRNA = N(6)-L-threonylcarbamoyladenosine(37) in tRNA + AMP + H(+). Functionally, required for the formation of a threonylcarbamoyl group on adenosine at position 37 (t(6)A37) in tRNAs that read codons beginning with adenine. Is involved in the transfer of the threonylcarbamoyl moiety of threonylcarbamoyl-AMP (TC-AMP) to the N6 group of A37, together with TsaE and TsaB. TsaD likely plays a direct catalytic role in this reaction. The protein is tRNA N6-adenosine threonylcarbamoyltransferase of Mycobacterium tuberculosis (strain ATCC 25177 / H37Ra).